The chain runs to 335 residues: Adenine deaminase (335 aa).

Positions 14, 16, and 194 each coordinate Zn(2+). The Proton donor role is filled by E197. D275 contributes to the Zn(2+) binding site. D276 is a binding site for substrate.

The protein belongs to the metallo-dependent hydrolases superfamily. Adenosine and AMP deaminases family. Adenine deaminase type 2 subfamily. It depends on Zn(2+) as a cofactor.

The enzyme catalyses adenine + H2O + H(+) = hypoxanthine + NH4(+). Catalyzes the hydrolytic deamination of adenine to hypoxanthine. Plays an important role in the purine salvage pathway and in nitrogen catabolism. The polypeptide is Adenine deaminase (Chlorobium phaeobacteroides (strain BS1)).